Consider the following 485-residue polypeptide: Glutamyl-tRNA(Gln) amidotransferase subunit A (485 aa).

Catalysis depends on charge relay system residues Lys76 and Ser152. Ser176 acts as the Acyl-ester intermediate in catalysis.

It belongs to the amidase family. GatA subfamily. As to quaternary structure, heterotrimer of A, B and C subunits.

It carries out the reaction L-glutamyl-tRNA(Gln) + L-glutamine + ATP + H2O = L-glutaminyl-tRNA(Gln) + L-glutamate + ADP + phosphate + H(+). Its function is as follows. Allows the formation of correctly charged Gln-tRNA(Gln) through the transamidation of misacylated Glu-tRNA(Gln) in organisms which lack glutaminyl-tRNA synthetase. The reaction takes place in the presence of glutamine and ATP through an activated gamma-phospho-Glu-tRNA(Gln). This Dechloromonas aromatica (strain RCB) protein is Glutamyl-tRNA(Gln) amidotransferase subunit A.